Here is a 172-residue protein sequence, read N- to C-terminus: Large ribosomal subunit protein uL10 (172 aa).

Belongs to the universal ribosomal protein uL10 family. As to quaternary structure, part of the ribosomal stalk of the 50S ribosomal subunit. The N-terminus interacts with L11 and the large rRNA to form the base of the stalk. The C-terminus forms an elongated spine to which L12 dimers bind in a sequential fashion forming a multimeric L10(L12)X complex.

Forms part of the ribosomal stalk, playing a central role in the interaction of the ribosome with GTP-bound translation factors. The chain is Large ribosomal subunit protein uL10 from Brucella anthropi (strain ATCC 49188 / DSM 6882 / CCUG 24695 / JCM 21032 / LMG 3331 / NBRC 15819 / NCTC 12168 / Alc 37) (Ochrobactrum anthropi).